The chain runs to 477 residues: 3-isopropylmalate dehydratase large subunit (477 aa).

[4Fe-4S] cluster is bound by residues C351, C411, and C414.

Belongs to the aconitase/IPM isomerase family. LeuC type 1 subfamily. Heterodimer of LeuC and LeuD. [4Fe-4S] cluster serves as cofactor.

It catalyses the reaction (2R,3S)-3-isopropylmalate = (2S)-2-isopropylmalate. It participates in amino-acid biosynthesis; L-leucine biosynthesis; L-leucine from 3-methyl-2-oxobutanoate: step 2/4. Functionally, catalyzes the isomerization between 2-isopropylmalate and 3-isopropylmalate, via the formation of 2-isopropylmaleate. The polypeptide is 3-isopropylmalate dehydratase large subunit (Kineococcus radiotolerans (strain ATCC BAA-149 / DSM 14245 / SRS30216)).